Consider the following 88-residue polypeptide: Small ribosomal subunit protein bS20 (88 aa).

Residues 1 to 21 form a disordered region; sequence MANSAQAKKRARQNVKARKHN. Over residues 7 to 21 the composition is skewed to basic residues; sequence AKKRARQNVKARKHN.

This sequence belongs to the bacterial ribosomal protein bS20 family.

Its function is as follows. Binds directly to 16S ribosomal RNA. In Acinetobacter baumannii (strain AB307-0294), this protein is Small ribosomal subunit protein bS20.